The following is a 195-amino-acid chain: Large ribosomal subunit protein bL25 (195 aa).

It belongs to the bacterial ribosomal protein bL25 family. CTC subfamily. In terms of assembly, part of the 50S ribosomal subunit; part of the 5S rRNA/L5/L18/L25 subcomplex. Contacts the 5S rRNA. Binds to the 5S rRNA independently of L5 and L18.

Its function is as follows. This is one of the proteins that binds to the 5S RNA in the ribosome where it forms part of the central protuberance. This chain is Large ribosomal subunit protein bL25, found in Geobacter metallireducens (strain ATCC 53774 / DSM 7210 / GS-15).